The following is a 96-amino-acid chain: Salivary protein FS50 (96 aa).

The first 19 residues, Met-1 to Ser-19, serve as a signal peptide directing secretion. Cystine bridges form between Cys-26–Cys-71, Cys-50–Cys-78, Cys-63–Cys-91, and Cys-67–Cys-93.

It localises to the secreted. Its function is as follows. Salivary protein that inhibits host voltage-gated sodium channel Nav1.5/SCN5A. The sequence is that of Salivary protein FS50 from Xenopsylla cheopis (Oriental rat flea).